We begin with the raw amino-acid sequence, 518 residues long: Hyccin (518 aa).

2 disordered regions span residues G385–L410 and V466–A492. Residues S393–A403 are compositionally biased toward basic and acidic residues. Residues V466 to V484 are compositionally biased toward polar residues.

It belongs to the Hyccin family. As to quaternary structure, component of a phosphatidylinositol 4-kinase (PI4K) complex.

It is found in the cytoplasm. The protein resides in the cytosol. Its subcellular location is the cell membrane. Its function is as follows. Component of a complex required to localize phosphatidylinositol 4-kinase (PI4K) to the plasma membrane. The complex acts as a regulator of phosphatidylinositol 4-phosphate (PtdIns(4)P) synthesis. The protein is Hyccin (hycc1) of Danio rerio (Zebrafish).